We begin with the raw amino-acid sequence, 249 residues long: 4-hydroxy-tetrahydrodipicolinate reductase (249 aa).

NAD(+) contacts are provided by residues Asp-32, 74–76 (GTT), and 99–102 (SANF). The Proton donor/acceptor role is filled by His-134. A (S)-2,3,4,5-tetrahydrodipicolinate-binding site is contributed by His-135. Catalysis depends on Lys-138, which acts as the Proton donor. 144 to 145 (GT) contributes to the (S)-2,3,4,5-tetrahydrodipicolinate binding site.

This sequence belongs to the DapB family.

The protein localises to the cytoplasm. It carries out the reaction (S)-2,3,4,5-tetrahydrodipicolinate + NAD(+) + H2O = (2S,4S)-4-hydroxy-2,3,4,5-tetrahydrodipicolinate + NADH + H(+). It catalyses the reaction (S)-2,3,4,5-tetrahydrodipicolinate + NADP(+) + H2O = (2S,4S)-4-hydroxy-2,3,4,5-tetrahydrodipicolinate + NADPH + H(+). Its pathway is amino-acid biosynthesis; L-lysine biosynthesis via DAP pathway; (S)-tetrahydrodipicolinate from L-aspartate: step 4/4. In terms of biological role, catalyzes the conversion of 4-hydroxy-tetrahydrodipicolinate (HTPA) to tetrahydrodipicolinate. This is 4-hydroxy-tetrahydrodipicolinate reductase from Chlorobaculum parvum (strain DSM 263 / NCIMB 8327) (Chlorobium vibrioforme subsp. thiosulfatophilum).